A 279-amino-acid chain; its full sequence is Oxygen-dependent coproporphyrinogen-III oxidase (279 aa).

Ser-102 provides a ligand contact to substrate. A divalent metal cation contacts are provided by His-106 and His-116. Residue His-116 is the Proton donor of the active site. Residue Asn-118–Arg-120 participates in substrate binding. A divalent metal cation contacts are provided by His-149 and His-179. The tract at residues Tyr-244–Ala-279 is important for dimerization.

The protein belongs to the aerobic coproporphyrinogen-III oxidase family. In terms of assembly, homodimer. A divalent metal cation serves as cofactor.

The protein localises to the cytoplasm. The enzyme catalyses coproporphyrinogen III + O2 + 2 H(+) = protoporphyrinogen IX + 2 CO2 + 2 H2O. It functions in the pathway porphyrin-containing compound metabolism; protoporphyrin-IX biosynthesis; protoporphyrinogen-IX from coproporphyrinogen-III (O2 route): step 1/1. Involved in the heme biosynthesis. Catalyzes the aerobic oxidative decarboxylation of propionate groups of rings A and B of coproporphyrinogen-III to yield the vinyl groups in protoporphyrinogen-IX. The chain is Oxygen-dependent coproporphyrinogen-III oxidase from Rickettsia bellii (strain RML369-C).